A 64-amino-acid polypeptide reads, in one-letter code: Large ribosomal subunit protein bL35 (64 aa).

This sequence belongs to the bacterial ribosomal protein bL35 family.

The sequence is that of Large ribosomal subunit protein bL35 from Micrococcus luteus (strain ATCC 4698 / DSM 20030 / JCM 1464 / CCM 169 / CCUG 5858 / IAM 1056 / NBRC 3333 / NCIMB 9278 / NCTC 2665 / VKM Ac-2230) (Micrococcus lysodeikticus).